The primary structure comprises 107 residues: Acidic phospholipase A2 braziliase-I (107 aa).

Cystine bridges form between cysteine 26–cysteine 100, cysteine 28–cysteine 44, cysteine 43–cysteine 86, cysteine 49–cysteine 107, cysteine 50–cysteine 79, cysteine 57–cysteine 72, and cysteine 66–cysteine 77. Residues tyrosine 27, glycine 29, and glycine 31 each contribute to the Ca(2+) site. Histidine 47 is a catalytic residue. Aspartate 48 is a binding site for Ca(2+). Residue aspartate 80 is part of the active site.

In terms of assembly, monomer. Ca(2+) serves as cofactor. Expressed by the venom gland.

It localises to the secreted. The enzyme catalyses a 1,2-diacyl-sn-glycero-3-phosphocholine + H2O = a 1-acyl-sn-glycero-3-phosphocholine + a fatty acid + H(+). Snake venom phospholipase A2 (PLA2) that induces significant edematogenic activity. Shows mild cytotoxicity on Trypanosoma cruzi and Leishmania infantum. Also inhibits ADP- and collagen-induced platelet aggregation. Does not show myotoxic activity. The chain is Acidic phospholipase A2 braziliase-I from Bothrops brazili (Brazil's lancehead).